Reading from the N-terminus, the 141-residue chain is Putative pre-16S rRNA nuclease (141 aa).

This sequence belongs to the YqgF nuclease family.

It is found in the cytoplasm. Functionally, could be a nuclease involved in processing of the 5'-end of pre-16S rRNA. This chain is Putative pre-16S rRNA nuclease, found in Amoebophilus asiaticus (strain 5a2).